The following is a 295-amino-acid chain: MPWIQIKLNATNENAEQIGDMLMEETGALSVTFLDAQDTPVFEPLPGETRLWGDTDILALYDAEADTNFIITQIKASNMLADDFAYKVEQLEDKDWEREWMENFHPMKFGERLWICPSWREIPEPDAVNVMLDPGLAFGTGTHPTTALCLEWLESLDLSGKTVIDFGCGSGILAIAAIKLGAEKVIGIDIDPQALQASRDNAERNGVANQLEVFLPQNQPEGLIADVVVANILAGPLRELAPIIKSLVKPNGDLAMSGVLDTQAEDVANHYRDELHIDPIAEQSEWCRISGRKQG.

Residues Thr146, Gly167, Asp189, and Asn231 each contribute to the S-adenosyl-L-methionine site.

Belongs to the methyltransferase superfamily. PrmA family.

The protein localises to the cytoplasm. It carries out the reaction L-lysyl-[protein] + 3 S-adenosyl-L-methionine = N(6),N(6),N(6)-trimethyl-L-lysyl-[protein] + 3 S-adenosyl-L-homocysteine + 3 H(+). Its function is as follows. Methylates ribosomal protein L11. In Vibrio campbellii (strain ATCC BAA-1116), this protein is Ribosomal protein L11 methyltransferase.